The primary structure comprises 201 residues: 3-isopropylmalate dehydratase small subunit (201 aa).

This sequence belongs to the LeuD family. LeuD type 1 subfamily. Heterodimer of LeuC and LeuD.

The catalysed reaction is (2R,3S)-3-isopropylmalate = (2S)-2-isopropylmalate. It participates in amino-acid biosynthesis; L-leucine biosynthesis; L-leucine from 3-methyl-2-oxobutanoate: step 2/4. Catalyzes the isomerization between 2-isopropylmalate and 3-isopropylmalate, via the formation of 2-isopropylmaleate. The protein is 3-isopropylmalate dehydratase small subunit of Escherichia coli O127:H6 (strain E2348/69 / EPEC).